We begin with the raw amino-acid sequence, 484 residues long: Nuclear rim protein 1 (484 aa).

Phosphoserine is present on S3. 2 helical membrane passes run 145–165 and 237–257; these read FTIF…MFGY and IPTN…IVFL. The segment at 416 to 457 is disordered; that stretch reads SSNENLEKGGAFLPNQDQNRPSKSLSPLRKTPLSARQKRFEG. S417 carries the phosphoserine modification. The segment covering 430-440 has biased composition (polar residues); it reads NQDQNRPSKSL. A Phosphoserine modification is found at S474.

It belongs to the NUR1 family. Interacts with CSM1.

The protein resides in the nucleus membrane. In terms of biological role, member of a perinuclear network that controls recombination at multiple loci to maintain genome stability. Required for rDNA repeat stability. The polypeptide is Nuclear rim protein 1 (NUR1) (Saccharomyces cerevisiae (strain JAY291) (Baker's yeast)).